A 411-amino-acid chain; its full sequence is Serine--tRNA ligase (411 aa).

An L-serine-binding site is contributed by 226-228 (TSE). Residue 257–259 (RQE) participates in ATP binding. L-serine is bound at residue glutamate 280. 344–347 (EISS) contacts ATP. Serine 379 is a binding site for L-serine.

This sequence belongs to the class-II aminoacyl-tRNA synthetase family. Type-1 seryl-tRNA synthetase subfamily. Homodimer. The tRNA molecule binds across the dimer.

It localises to the cytoplasm. It catalyses the reaction tRNA(Ser) + L-serine + ATP = L-seryl-tRNA(Ser) + AMP + diphosphate + H(+). The catalysed reaction is tRNA(Sec) + L-serine + ATP = L-seryl-tRNA(Sec) + AMP + diphosphate + H(+). The protein operates within aminoacyl-tRNA biosynthesis; selenocysteinyl-tRNA(Sec) biosynthesis; L-seryl-tRNA(Sec) from L-serine and tRNA(Sec): step 1/1. Its function is as follows. Catalyzes the attachment of serine to tRNA(Ser). Is also able to aminoacylate tRNA(Sec) with serine, to form the misacylated tRNA L-seryl-tRNA(Sec), which will be further converted into selenocysteinyl-tRNA(Sec). The sequence is that of Serine--tRNA ligase from Campylobacter lari (strain RM2100 / D67 / ATCC BAA-1060).